A 323-amino-acid chain; its full sequence is MELTGVTSQSIFDDNAADIKLSWVAGLEGADRAFDVEFAREATSAADLVGHLNLIHPNRIQVLGKPEITYYQRLDDETRKRQMGELILLEPPFLVIADGMEPPPDLELRCTRSSTPLFTTPVSSAAVIDHLRLYLSRISAPRVTMHGVFLDILGMGVLIMGESGLGKSELGLELISRGHGLVADDAVDFVRLGPDFIEGRCPPLLQNLLEVRGLGLLDIKTIFGETAVRRKMKIKLVVQLVRRNDGEFERLPLDSQYLDVLGLPIHMVKIQVAAGRNLAVLVEAAVRNTILRLRGIDTLRDFMDRQRAAMQADAVSRGQGRLL.

Active-site residues include His-146 and Lys-167. 161–168 provides a ligand contact to ATP; that stretch reads GESGLGKS. Ser-168 serves as a coordination point for Mg(2+). The active-site Proton acceptor; for phosphorylation activity. Proton donor; for dephosphorylation activity is the Asp-185. Residues 209–218 are important for the catalytic mechanism of both phosphorylation and dephosphorylation; the sequence is LEVRGLGLLD. Residue Glu-210 participates in Mg(2+) binding. Residue Arg-250 is part of the active site. The tract at residues 271–276 is important for the catalytic mechanism of dephosphorylation; sequence QVAAGR.

The protein belongs to the HPrK/P family. As to quaternary structure, homohexamer. Mg(2+) is required as a cofactor.

The enzyme catalyses [HPr protein]-L-serine + ATP = [HPr protein]-O-phospho-L-serine + ADP + H(+). It catalyses the reaction [HPr protein]-O-phospho-L-serine + phosphate + H(+) = [HPr protein]-L-serine + diphosphate. Functionally, catalyzes the ATP- as well as the pyrophosphate-dependent phosphorylation of a specific serine residue in HPr, a phosphocarrier protein of the phosphoenolpyruvate-dependent sugar phosphotransferase system (PTS). HprK/P also catalyzes the pyrophosphate-producing, inorganic phosphate-dependent dephosphorylation (phosphorolysis) of seryl-phosphorylated HPr (P-Ser-HPr). This is HPr kinase/phosphorylase from Cupriavidus necator (strain ATCC 17699 / DSM 428 / KCTC 22496 / NCIMB 10442 / H16 / Stanier 337) (Ralstonia eutropha).